The following is a 568-amino-acid chain: Urease subunit alpha (568 aa).

The 440-residue stretch at 129–568 (GAIDSHIHFI…LPMAQRYFLF (440 aa)) folds into the Urease domain. His-134, His-136, and Lys-217 together coordinate Ni(2+). Lys-217 is modified (N6-carboxylysine). Residue His-219 participates in substrate binding. The Ni(2+) site is built by His-246 and His-272. Residue His-320 is the Proton donor of the active site. Ni(2+) is bound at residue Asp-360.

It belongs to the metallo-dependent hydrolases superfamily. Urease alpha subunit family. As to quaternary structure, heterotrimer of UreA (gamma), UreB (beta) and UreC (alpha) subunits. Three heterotrimers associate to form the active enzyme. It depends on Ni cation as a cofactor. Post-translationally, carboxylation allows a single lysine to coordinate two nickel ions.

Its subcellular location is the cytoplasm. It carries out the reaction urea + 2 H2O + H(+) = hydrogencarbonate + 2 NH4(+). It functions in the pathway nitrogen metabolism; urea degradation; CO(2) and NH(3) from urea (urease route): step 1/1. In Saccharophagus degradans (strain 2-40 / ATCC 43961 / DSM 17024), this protein is Urease subunit alpha.